The following is a 382-amino-acid chain: tRNA(Met) cytidine acetate ligase (382 aa).

ATP contacts are provided by residues 9 to 22 (VTEY…HAYQ), Gly103, Asn152, and Arg177.

It belongs to the TmcAL family.

It is found in the cytoplasm. It catalyses the reaction cytidine(34) in elongator tRNA(Met) + acetate + ATP = N(4)-acetylcytidine(34) in elongator tRNA(Met) + AMP + diphosphate. Its function is as follows. Catalyzes the formation of N(4)-acetylcytidine (ac(4)C) at the wobble position of elongator tRNA(Met), using acetate and ATP as substrates. First activates an acetate ion to form acetyladenylate (Ac-AMP) and then transfers the acetyl group to tRNA to form ac(4)C34. In Levilactobacillus brevis (strain ATCC 367 / BCRC 12310 / CIP 105137 / JCM 1170 / LMG 11437 / NCIMB 947 / NCTC 947) (Lactobacillus brevis), this protein is tRNA(Met) cytidine acetate ligase.